The following is a 290-amino-acid chain: 4-hydroxybenzoate octaprenyltransferase (290 aa).

The next 9 membrane-spanning stretches (helical) occupy residues 23 to 43 (IGTE…SDGY), 46 to 66 (LKMF…GCAI), 96 to 116 (AIWV…FLPI), 118 to 138 (TFYW…MKRY), 141 to 161 (LPQV…YTAT), 169 to 189 (CWLL…QYAI), 212 to 232 (IPII…ALYI), 235 to 255 (LLFP…IYQW), and 265 to 285 (LCFW…LAIL).

This sequence belongs to the UbiA prenyltransferase family. Mg(2+) serves as cofactor.

Its subcellular location is the cell inner membrane. The catalysed reaction is all-trans-octaprenyl diphosphate + 4-hydroxybenzoate = 4-hydroxy-3-(all-trans-octaprenyl)benzoate + diphosphate. The protein operates within cofactor biosynthesis; ubiquinone biosynthesis. In terms of biological role, catalyzes the prenylation of para-hydroxybenzoate (PHB) with an all-trans polyprenyl group. Mediates the second step in the final reaction sequence of ubiquinone-8 (UQ-8) biosynthesis, which is the condensation of the polyisoprenoid side chain with PHB, generating the first membrane-bound Q intermediate 3-octaprenyl-4-hydroxybenzoate. The sequence is that of 4-hydroxybenzoate octaprenyltransferase from Acinetobacter baylyi (strain ATCC 33305 / BD413 / ADP1).